The chain runs to 194 residues: H-N-H endonuclease F-TflI (194 aa).

In terms of biological role, endonuclease that cleaves only one strand of asymmetric DNA substrates thereby introducing interruptions into the template or coding strand. This Escherichia coli (Enterobacteria phage T5) protein is H-N-H endonuclease F-TflI.